Here is a 349-residue protein sequence, read N- to C-terminus: UDP-N-acetylenolpyruvoylglucosamine reductase (349 aa).

Residues 24-197 (FGIAATARFA…VSVTFRLPKQ (174 aa)) enclose the FAD-binding PCMH-type domain. Residue Arg-173 is part of the active site. Ser-249 (proton donor) is an active-site residue. Residue Glu-345 is part of the active site.

It belongs to the MurB family. FAD is required as a cofactor.

The protein resides in the cytoplasm. The catalysed reaction is UDP-N-acetyl-alpha-D-muramate + NADP(+) = UDP-N-acetyl-3-O-(1-carboxyvinyl)-alpha-D-glucosamine + NADPH + H(+). It participates in cell wall biogenesis; peptidoglycan biosynthesis. Cell wall formation. This is UDP-N-acetylenolpyruvoylglucosamine reductase from Burkholderia lata (strain ATCC 17760 / DSM 23089 / LMG 22485 / NCIMB 9086 / R18194 / 383).